The sequence spans 2380 residues: DNA polymerase epsilon catalytic subunit A (2380 aa).

The span at 169-196 (YYNKGNNNNNNHQNYNNNNNQNNNNFNK) shows a compositional bias: low complexity. Disordered regions lie at residues 169-209 (YYNK…NNSK), 1178-1210 (FFEKTEDNDQDNDNDNDNDNDNDNDNSKPQQTD), 1766-1787 (KNTSNNSNTKNGANQNTTNDTT), 1967-1998 (QQQQQQQDNADDDDDDDVSENEEEQQQNKNKK), and 2059-2120 (KIST…TTTS). Positions 1183–1201 (EDNDQDNDNDNDNDNDNDN) are enriched in acidic residues. Positions 1767-1776 (NTSNNSNTKN) are enriched in low complexity. Polar residues predominate over residues 1777–1787 (GANQNTTNDTT). A compositionally biased stretch (acidic residues) spans 1975-1991 (NADDDDDDDVSENEEEQ). 2 stretches are compositionally biased toward low complexity: residues 2059–2081 (KISTTSSSSNNDSTAATTTTTKD) and 2110–2120 (SSSSSTTTTTS). Cysteine 2225 and cysteine 2228 together coordinate Zn(2+). The CysA-type zinc-finger motif lies at 2225–2288 (CSSCHSCRDI…RVPELSCIQC (64 aa)). The span at 2245-2258 (ISSRLSSQQKSNNN) shows a compositional bias: low complexity. Residues 2245–2275 (ISSRLSSQQKSNNNDSDDSDDDNEENEGDDD) form a disordered region. Positions 2259–2275 (DSDDSDDDNEENEGDDD) are enriched in acidic residues. Residues cysteine 2285 and cysteine 2288 each coordinate Zn(2+). 4 residues coordinate [4Fe-4S] cluster: cysteine 2319, cysteine 2322, cysteine 2334, and cysteine 2337. A CysB motif motif is present at residues 2319–2337 (CSKCNDVKSDNLGDICPQC).

This sequence belongs to the DNA polymerase type-B family. As to quaternary structure, consists of three subunits: pole, pole2 and pole3. The cofactor is [4Fe-4S] cluster.

It is found in the nucleus. The catalysed reaction is DNA(n) + a 2'-deoxyribonucleoside 5'-triphosphate = DNA(n+1) + diphosphate. In terms of biological role, DNA polymerase II participates in chromosomal DNA replication. The chain is DNA polymerase epsilon catalytic subunit A (pole) from Dictyostelium discoideum (Social amoeba).